A 522-amino-acid polypeptide reads, in one-letter code: Putative E3 ubiquitin-protein ligase RING1a (522 aa).

Polar residues predominate over residues M1–S10. The disordered stretch occupies residues M1–Q119. The span at L32–D64 shows a compositional bias: basic and acidic residues. Acidic residues predominate over residues A65 to D106. The segment at C136 to R176 adopts an RING-type zinc-finger fold. Disordered regions lie at residues V250–G347 and R363–R385. Positions N287–R306 are enriched in basic and acidic residues. Positions S316–S325 are enriched in low complexity. Composition is skewed to polar residues over residues G326 to D336 and T366 to V384.

Homodimer or heterodimer with RING1B. Interacts with CLF. Component of the PRC1-like complex, at least composed of RING1A, RING1B and LHP1.

It localises to the nucleus. It catalyses the reaction S-ubiquitinyl-[E2 ubiquitin-conjugating enzyme]-L-cysteine + [acceptor protein]-L-lysine = [E2 ubiquitin-conjugating enzyme]-L-cysteine + N(6)-ubiquitinyl-[acceptor protein]-L-lysine.. It functions in the pathway protein modification; protein ubiquitination. Its function is as follows. Putative E3 ubiquitin-protein ligase that mediates monoubiquitination of 'Lys-119' of histone H2A (H2AK119ub), thereby playing a central role in histone code and gene regulation. Functionally, as part of the PRC1-like complex, repress class I KNOX gene expression. PcG PRC1 complex maintains the transcriptionally repressive state of many genes, including Hox genes, throughout development. PcG PRC1 complex acts via chromatin remodeling and modification of histones, rendering chromatin heritably changed in its expressibility. In Arabidopsis thaliana (Mouse-ear cress), this protein is Putative E3 ubiquitin-protein ligase RING1a (RING1A).